A 290-amino-acid chain; its full sequence is ATP synthase gamma chain (290 aa).

The protein belongs to the ATPase gamma chain family. As to quaternary structure, F-type ATPases have 2 components, CF(1) - the catalytic core - and CF(0) - the membrane proton channel. CF(1) has five subunits: alpha(3), beta(3), gamma(1), delta(1), epsilon(1). CF(0) has three main subunits: a, b and c.

The protein resides in the cell inner membrane. In terms of biological role, produces ATP from ADP in the presence of a proton gradient across the membrane. The gamma chain is believed to be important in regulating ATPase activity and the flow of protons through the CF(0) complex. This chain is ATP synthase gamma chain, found in Erythrobacter litoralis (strain HTCC2594).